The sequence spans 468 residues: ATP synthase subunit beta (468 aa).

155 to 162 (GGAGVGKT) serves as a coordination point for ATP.

This sequence belongs to the ATPase alpha/beta chains family. As to quaternary structure, F-type ATPases have 2 components, CF(1) - the catalytic core - and CF(0) - the membrane proton channel. CF(1) has five subunits: alpha(3), beta(3), gamma(1), delta(1), epsilon(1). CF(0) has three main subunits: a(1), b(2) and c(9-12). The alpha and beta chains form an alternating ring which encloses part of the gamma chain. CF(1) is attached to CF(0) by a central stalk formed by the gamma and epsilon chains, while a peripheral stalk is formed by the delta and b chains.

Its subcellular location is the cell membrane. It catalyses the reaction ATP + H2O + 4 H(+)(in) = ADP + phosphate + 5 H(+)(out). Functionally, produces ATP from ADP in the presence of a proton gradient across the membrane. The catalytic sites are hosted primarily by the beta subunits. The protein is ATP synthase subunit beta of Streptococcus pneumoniae serotype 19F (strain G54).